Here is a 630-residue protein sequence, read N- to C-terminus: A-type voltage-gated potassium channel KCND2 (630 aa).

The Cytoplasmic portion of the chain corresponds to 1 to 184; the sequence is MAAGVAAWLP…FENPHTSTMA (184 aa). Residues 2–20 are interaction with KCNIP1, KCNIP2, and other family members; that stretch reads AAGVAAWLPFARAAAIGWM. T38 bears the Phosphothreonine mark. Positions 71–90 are interaction with KCNIP1; it reads ERDFFYHPETQQYFFDRDPD. H105, C111, C132, and C133 together coordinate Zn(2+). The chain crosses the membrane as a helical span at residues 185–206; it reads LVFYYVTGFFIAVSVIANVVET. The Extracellular portion of the chain corresponds to 207-226; the sequence is VPCGSSPGHIKELPCGERYA. The helical transmembrane segment at 227–249 threads the bilayer; that stretch reads VAFFCLDTACVMIFTVEYLLRLA. The Cytoplasmic portion of the chain corresponds to 250-256; it reads AAPSRYR. Residues 257-281 form a helical membrane-spanning segment; the sequence is FVRSVMSIIDVVAILPYYIGLVMTD. Over 282-287 the chain is Extracellular; the sequence is NEDVSG. Residues 288–307 form a helical; Voltage-sensor membrane-spanning segment; it reads AFVTLRVFRVFRIFKFSRHS. Topologically, residues 308-321 are cytoplasmic; it reads QGLRILGYTLKSCA. The S4-S5 linker stretch occupies residues 308-321; it reads QGLRILGYTLKSCA. Residues 322–345 form a helical membrane-spanning segment; the sequence is SELGFLLFSLTMAIIIFATVMFYA. The Extracellular segment spans residues 346 to 357; sequence EKGSSASKFTSI. Residues 358–369 constitute an intramembrane region (helical); that stretch reads PAAFWYTIVTMT. 4 residues coordinate K(+): T370, L371, G372, and Y373. The Selectivity filter signature appears at 370–375; it reads TLGYGD. Residues 370–377 lie within the membrane without spanning it; the sequence is TLGYGDMV. The Extracellular portion of the chain corresponds to 378–380; the sequence is PKT. A helical membrane pass occupies residues 381–403; it reads IAGKIFGSICSLSGVLVIALPVP. At 404–630 the chain is on the cytoplasmic side; it reads VIVSNFSRIY…GGNIVRVSAL (227 aa). The tract at residues 474–489 is required for dendritic targeting; sequence FETQHHHLLHCLEKTT. The important for normal channel activation and inactivation, for interaction with KCNIP2, and probably other family members as well stretch occupies residues 474–630; the sequence is FETQHHHLLH…GGNIVRVSAL (157 aa). 4 positions are modified to phosphoserine: S548, S552, S572, and S575. The disordered stretch occupies residues 600–622; sequence IPTPPVTTPEGDDRPESPEYSGG. A phosphothreonine mark is found at T602 and T607. S616 is subject to Phosphoserine. Positions 627 to 630 match the PDZ-binding motif; sequence VSAL.

This sequence belongs to the potassium channel family. D (Shal) (TC 1.A.1.2) subfamily. Kv4.2/KCND2 sub-subfamily. Homotetramer or heterotetramer with KCND1 or KCND3. Associates with the regulatory subunits KCNIP2, KCNIP3 and KCNIP4. Interacts with the regulatory subunit KCNIP1; this interaction mediates the capture of both the N- and C-terminus of KCND2, preventing N-type inactivation and stabilizing the S6 conformation, thereby accelerating closed state inactivation and recovery. In vivo, probably exists as heteromeric complex containing variable proportions of KCND1, KCND2, KCND3, KCNIP1, KCNIP2, KCNIP3, KCNIP4, DPP6 and DPP10. The tetrameric channel can associate with up to four regulatory subunits, such as KCNIP2 or KCNIP4. Interaction with four KCNIP4 chains does not reduce interaction with DPP10. Interacts with DLG4 and NCS1/FREQ. Interacts with DLG1. Probably part of a complex consisting of KCNIP1, KCNIP2 isoform 3 and KCND2. Interacts with FLNA, FLNC and DPP10. Identified in a complex with cAMP-dependent protein kinase (PKA), CAV3, AKAP6 and KCND3 in cardiac myocytes. Interacts (via S1 and S2 helices) with DPP6; this interaction stabilizes the conformation of the S1-S2 helices and facilitates S4 conformational change, including S4 sliding up and down, thereby accelerating activation, inactivation, and recovery. Phosphorylation in response to MAPK activation is increased in stimulated dendrites. Interaction with KCNIP2 and DPP6 propomtes phosphorylation by PKA at Ser-552. Phosphorylation at Ser-552 has no effect on interaction with KCNIP3, but is required for the regulation of channel activity by KCNIP3. Phosphorylation at Ser-552 leads to KCND2 internalization. Phosphorylated by MAPK in response to signaling via the metabotropic glutamate receptor GRM5. Phosphorylation at Ser-616 is required for the down-regulation of neuronal A-type currents in response to signaling via GRM5.

The protein localises to the cell membrane. Its subcellular location is the cell projection. It localises to the dendrite. The protein resides in the synapse. It is found in the perikaryon. The protein localises to the postsynaptic cell membrane. Its subcellular location is the dendritic spine. It localises to the sarcolemma. The protein resides in the cell junction. It is found in the membrane. The protein localises to the caveola. It catalyses the reaction K(+)(in) = K(+)(out). Functionally, voltage-gated potassium channel that mediates transmembrane potassium transport in excitable membranes, primarily in the brain, but also in rodent heart. Mediates the major part of the dendritic A-type current I(SA) in brain neurons. This current is activated at membrane potentials that are below the threshold for action potentials. It regulates neuronal excitability, prolongs the latency before the first spike in a series of action potentials, regulates the frequency of repetitive action potential firing, shortens the duration of action potentials and regulates the back-propagation of action potentials from the neuronal cell body to the dendrites. Contributes to the regulation of the circadian rhythm of action potential firing in suprachiasmatic nucleus neurons, which regulates the circadian rhythm of locomotor activity. Functions downstream of the metabotropic glutamate receptor GRM5 and plays a role in neuronal excitability and in nociception mediated by activation of GRM5. Mediates the transient outward current I(to) in rodent heart left ventricle apex cells, but not in human heart, where this current is mediated by another family member. Forms tetrameric potassium-selective channels through which potassium ions pass in accordance with their electrochemical gradient. The channel alternates between opened and closed conformations in response to the voltage difference across the membrane. Can form functional homotetrameric channels and heterotetrameric channels that contain variable proportions of KCND2 and KCND3; channel properties depend on the type of pore-forming alpha subunits that are part of the channel. In vivo, membranes probably contain a mixture of heteromeric potassium channel complexes. Interaction with specific isoforms of the regulatory subunits KCNIP1, KCNIP2, KCNIP3 or KCNIP4 strongly increases expression at the cell surface and thereby increases channel activity; it modulates the kinetics of channel activation and inactivation, shifts the threshold for channel activation to more negative voltage values, shifts the threshold for inactivation to less negative voltages and accelerates recovery after inactivation. Likewise, interaction with DPP6 or DPP10 promotes expression at the cell membrane and regulates both channel characteristics and activity. Upon depolarization, the channel goes from a resting closed state (C state) to an activated but non-conducting state (C* state), from there, the channel may either inactivate (I state) or open (O state). The chain is A-type voltage-gated potassium channel KCND2 from Mustela putorius furo (European domestic ferret).